The chain runs to 170 residues: 3-isopropylmalate dehydratase small subunit 1 (170 aa).

The protein belongs to the LeuD family. LeuD type 2 subfamily. Heterodimer of LeuC and LeuD.

It carries out the reaction (2R,3S)-3-isopropylmalate = (2S)-2-isopropylmalate. It participates in amino-acid biosynthesis; L-leucine biosynthesis; L-leucine from 3-methyl-2-oxobutanoate: step 2/4. In terms of biological role, catalyzes the isomerization between 2-isopropylmalate and 3-isopropylmalate, via the formation of 2-isopropylmaleate. This chain is 3-isopropylmalate dehydratase small subunit 1 (leuD1), found in Methanopyrus kandleri (strain AV19 / DSM 6324 / JCM 9639 / NBRC 100938).